A 42-amino-acid chain; its full sequence is Potassium channel toxin gamma-KTx 1.4 (42 aa).

Intrachain disulfides connect Cys-5–Cys-23, Cys-11–Cys-34, Cys-20–Cys-39, and Cys-24–Cys-41.

This sequence belongs to the ergtoxin family. Gamma-KTx 1 subfamily. In terms of tissue distribution, expressed by the venom gland.

Its subcellular location is the secreted. Functionally, blocks Kv11/ERG potassium channels. This chain is Potassium channel toxin gamma-KTx 1.4, found in Centruroides sculpturatus (Arizona bark scorpion).